The following is a 101-amino-acid chain: Salivary thrombin inhibitor anophelin (101 aa).

A signal peptide spans 1-21 (MASKVIVIALLCIALAAFVQG). The disordered stretch occupies residues 26–101 (THGEEPEYDE…SDSSSGSTEN (76 aa)). The span at 31-40 (PEYDEDDGAD) shows a compositional bias: acidic residues. The tract at residues 75-78 (DPGR) is blocks active site cleft of host thrombin in a reverse direction compared to substrates. Over residues 75–87 (DPGRRPEFLKQHN) the composition is skewed to basic and acidic residues. Residues 88–101 (NENQSDSSSGSTEN) are compositionally biased toward polar residues. Asparagine 90 is a glycosylation site (N-linked (GlcNAc...) asparagine).

Belongs to the anophelin family. In terms of assembly, interacts with human F2 (thrombin); the interaction results in thrombin inhibition.

It is found in the secreted. Functionally, salivary protein with anticoagulant activity that inhibits host thrombin (F2). The polypeptide is Salivary thrombin inhibitor anophelin (Anopheles stephensi (Indo-Pakistan malaria mosquito)).